A 346-amino-acid chain; its full sequence is MAVYAVTGGAGFLGRYIVKLLISADDVQEIRVIDIVEDPQPITSKVKVINYIQCDINDFDKVREALDGVNLIIHTAALVDVFGKYTDNEIMKVNYYGTQTILAACVDLGIKYLIYTSSMEAIGPNKHGDPFIGHEHTLYDISPGHVYAKSKRMAEQLVMKANNSVIMNGAKLYTCCLRPTGIYGEGDKLMKVFYEQCKQHGNIMYRTVDDNAVHSRVYVGNAAWMHVLAAKYIQYPGSEIKGNAYFCYDYSPSCSYDMFNLLLMKPLGIEQGSRIPRWMLKMYACKNDMKRILFRKPSLLNNYTLKISNTTFEVRTNNAELDFNYSPIFNVDVAFERTRKWLEESE.

Tyrosine 147 serves as the catalytic Proton acceptor. Lysine 151 contributes to the NAD(+) binding site.

This sequence belongs to the 3-beta-HSD family.

The enzyme catalyses a 3beta-hydroxy-Delta(5)-steroid + NAD(+) = a 3-oxo-Delta(5)-steroid + NADH + H(+). It catalyses the reaction a 3-oxo-Delta(5)-steroid = a 3-oxo-Delta(4)-steroid. It functions in the pathway lipid metabolism; steroid biosynthesis. Its function is as follows. Catalyzes the oxidative conversion of Delta(5)-ene-3-beta-hydroxy steroid, and the oxidative conversion of ketosteroids. The 3-beta-HSD enzymatic system plays a crucial role in the biosynthesis of all classes of hormonal steroids. During viral infection, steroid production contributes to virulence by inhibiting the host inflammatory response. This Homo sapiens (Human) protein is 3 beta-hydroxysteroid dehydrogenase/Delta 5--&gt;4-isomerase (OPG174).